Reading from the N-terminus, the 65-residue chain is Small ribosomal subunit protein bS21 (65 aa).

It belongs to the bacterial ribosomal protein bS21 family.

This is Small ribosomal subunit protein bS21 from Trichlorobacter lovleyi (strain ATCC BAA-1151 / DSM 17278 / SZ) (Geobacter lovleyi).